The following is a 675-amino-acid chain: Vitamin K-dependent protein S (675 aa).

Residues 1–24 form the signal peptide; the sequence is MRVLGGRTGTLLACLALVLPVLEA. Residues 25–41 constitute a propeptide that is removed on maturation; it reads NFLSRQHASQVLIRRRR. The 46-residue stretch at 42–87 folds into the Gla domain; that stretch reads ANTLLEETKKGNLERECIEELCNKEEAREIFENNPETEYFYPKYLG. 11 positions are modified to 4-carboxyglutamate: Glu-47, Glu-48, Glu-55, Glu-57, Glu-60, Glu-61, Glu-66, Glu-67, Glu-70, Glu-73, and Glu-77. A disulfide bond links Cys-58 and Cys-63. Intrachain disulfides connect Cys-88–Cys-113, Cys-121–Cys-134, Cys-126–Cys-143, Cys-145–Cys-154, Cys-161–Cys-175, Cys-171–Cys-184, Cys-186–Cys-199, Cys-205–Cys-217, Cys-212–Cys-226, Cys-228–Cys-241, Cys-247–Cys-256, Cys-252–Cys-265, Cys-267–Cys-282, Cys-288–Cys-567, Cys-449–Cys-475, and Cys-638–Cys-665. Residues 88–116 form a thrombin-sensitive region; that stretch reads CLGSFRAGLFTAARLSTNAYPDLRSCVNA. In terms of domain architecture, EGF-like 1 spans 117–155; it reads ISDQCNPLPCNEDGFMTCKDGQATFTCICKSGWQGEKCE. (3R)-3-hydroxyaspartate is present on Asp-136. In terms of domain architecture, EGF-like 2; calcium-binding spans 157–200; the sequence is DINECKDPVNINGGCSQICENTPGSYHCSCKNGFVMLSNKKDCK. Asn-177 is modified ((3R)-3-hydroxyasparagine). Residues 201–242 enclose the EGF-like 3; calcium-binding domain; the sequence is DVDECVLKPSICGTAVCKNIPGDFECECAEGYKYNPVSKSCD. Asn-219 carries the (3R)-3-hydroxyasparagine modification. Residues 243–283 enclose the EGF-like 4; calcium-binding domain; it reads DVDECAENLCAQLCVNYPGGYSCYCDGKKGFKLAQDQKSCE. Position 258 is a (3R)-3-hydroxyasparagine (Asn-258). Laminin G-like domains follow at residues 299 to 475 and 484 to 665; these read LLYL…NKHC and YYPG…AHSC. Residues Asn-499 and Asn-509 are each glycosylated (N-linked (GlcNAc...) asparagine).

The iron and 2-oxoglutarate dependent 3-hydroxylation of aspartate and asparagine is (R) stereospecific within EGF domains. In terms of tissue distribution, plasma.

The protein localises to the secreted. Anticoagulant plasma protein; it is a cofactor to activated protein C in the degradation of coagulation factors Va and VIIIa. It helps to prevent coagulation and stimulating fibrinolysis. This Bos taurus (Bovine) protein is Vitamin K-dependent protein S (PROS1).